A 298-amino-acid chain; its full sequence is GTP cyclohydrolase FolE2 (298 aa).

It belongs to the GTP cyclohydrolase IV family.

The catalysed reaction is GTP + H2O = 7,8-dihydroneopterin 3'-triphosphate + formate + H(+). It participates in cofactor biosynthesis; 7,8-dihydroneopterin triphosphate biosynthesis; 7,8-dihydroneopterin triphosphate from GTP: step 1/1. Functionally, converts GTP to 7,8-dihydroneopterin triphosphate. This is GTP cyclohydrolase FolE2 from Pseudomonas aeruginosa (strain LESB58).